Consider the following 180-residue polypeptide: Nucleoside triphosphate/diphosphate phosphatase (180 aa).

Arg26 acts as the Proton donor in catalysis. Residues Asn90, Asp106, Asp108, Asp110, Asp123, and Glu126 each coordinate Mg(2+).

It belongs to the Ntdp family. Mg(2+) is required as a cofactor.

It catalyses the reaction a ribonucleoside 5'-triphosphate + H2O = a ribonucleoside 5'-diphosphate + phosphate + H(+). The catalysed reaction is a ribonucleoside 5'-diphosphate + H2O = a ribonucleoside 5'-phosphate + phosphate + H(+). Has nucleoside phosphatase activity towards nucleoside triphosphates and nucleoside diphosphates. The sequence is that of Nucleoside triphosphate/diphosphate phosphatase from Staphylococcus aureus (strain Mu3 / ATCC 700698).